A 504-amino-acid polypeptide reads, in one-letter code: Taurochenodeoxycholic 6 alpha-hydroxylase (504 aa).

2 consecutive transmembrane segments (helical) span residues 6-26 and 110-130; these read LASVSGLLQVASLLGLLLLLL and APVLYRLLIPWIGCGLLLLNG. Cysteine 451 provides a ligand contact to heme.

It belongs to the cytochrome P450 family. The cofactor is heme. Primarily expressed in liver. Low expression in kidney.

The protein localises to the endoplasmic reticulum membrane. The enzyme catalyses taurochenodeoxycholate + reduced [NADPH--hemoprotein reductase] + O2 = taurohyocholate + oxidized [NADPH--hemoprotein reductase] + H2O + H(+). It carries out the reaction lithocholate + reduced [NADPH--hemoprotein reductase] + O2 = hyodeoxycholate + oxidized [NADPH--hemoprotein reductase] + H2O + H(+). Functionally, catalyzes the 6 alpha hydroxylation oxidation of taurodeoxycholate to produce the pig specific bile acid taurohyocholic acid. The polypeptide is Taurochenodeoxycholic 6 alpha-hydroxylase (CYP4A21) (Sus scrofa (Pig)).